The following is a 635-amino-acid chain: Threonine--tRNA ligase (635 aa).

The segment at 1-152 is editing domain; it reads MQLLLIHSDY…AKAAVKPEAA (152 aa). Residues 215–514 form a catalytic region; sequence PHVELMRRLE…TEEGKVPMLP (300 aa). Residues Cys307, His359, and His483 each contribute to the Zn(2+) site.

It belongs to the class-II aminoacyl-tRNA synthetase family. Homodimer. Zn(2+) is required as a cofactor.

It is found in the cytoplasm. The enzyme catalyses tRNA(Thr) + L-threonine + ATP = L-threonyl-tRNA(Thr) + AMP + diphosphate + H(+). Functionally, catalyzes the attachment of threonine to tRNA(Thr) in a two-step reaction: L-threonine is first activated by ATP to form Thr-AMP and then transferred to the acceptor end of tRNA(Thr). Also edits incorrectly charged L-seryl-tRNA(Thr). The chain is Threonine--tRNA ligase from Methanosarcina acetivorans (strain ATCC 35395 / DSM 2834 / JCM 12185 / C2A).